The following is a 441-amino-acid chain: Glutamate--tRNA ligase 1 (441 aa).

The short motif at 8–18 (PSPTGYIHIGN) is the 'HIGH' region element. Positions 239–243 (ALSKR) match the 'KMSKS' region motif. Residue lysine 242 participates in ATP binding.

The protein belongs to the class-I aminoacyl-tRNA synthetase family. Glutamate--tRNA ligase type 1 subfamily. As to quaternary structure, monomer.

Its subcellular location is the cytoplasm. It catalyses the reaction tRNA(Glu) + L-glutamate + ATP = L-glutamyl-tRNA(Glu) + AMP + diphosphate. In terms of biological role, catalyzes the attachment of glutamate to tRNA(Glu) in a two-step reaction: glutamate is first activated by ATP to form Glu-AMP and then transferred to the acceptor end of tRNA(Glu). The sequence is that of Glutamate--tRNA ligase 1 from Roseobacter denitrificans (strain ATCC 33942 / OCh 114) (Erythrobacter sp. (strain OCh 114)).